The chain runs to 314 residues: Acetaldehyde dehydrogenase 4 (314 aa).

Residue 15–18 (SGNI) participates in NAD(+) binding. C133 (acyl-thioester intermediate) is an active-site residue. NAD(+) contacts are provided by residues 164 to 172 (SAGPGTRAN) and N292.

The protein belongs to the acetaldehyde dehydrogenase family.

It carries out the reaction acetaldehyde + NAD(+) + CoA = acetyl-CoA + NADH + H(+). In Burkholderia lata (strain ATCC 17760 / DSM 23089 / LMG 22485 / NCIMB 9086 / R18194 / 383), this protein is Acetaldehyde dehydrogenase 4.